Reading from the N-terminus, the 807-residue chain is Centrosomal protein of 97 kDa (807 aa).

LRR repeat units follow at residues 34–55, 56–77, 78–99, 100–121, 122–143, 144–165, and 168–189; these read DTQTLILDKNQIIKLEHVEKCR, NLVQLSVANNRLVRMMGVAKLI, HLRVLNLPHNSIGYVEGLKDLV, HLEWINLAGNNLKIIDQINSST, SLQHLDLSDNNISQIGDLSKLK, SLKTLLLHGNNIASLRAASACL, and SLTILSLAENEIRDLNEVAFLA. The 39-residue stretch at 208-246 folds into the LRRCT domain; that stretch reads TPSIPGFDYRPFIVSWCLNLKVLDGYVVSQKESLKAEWL. The interval 306 to 330 is disordered; it reads RSDGYLTSSTPNKRLPLSTEHHSPT. The 30-residue stretch at 519–548 folds into the IQ domain; it reads ISKAATKLQSCWRGFYARKYNPKVKDVCYE. The span at 607-623 shows a compositional bias: polar residues; it reads TANSSENDLPSASNSKH. Residues 607 to 756 are disordered; that stretch reads TANSSENDLP…RPEITTCSDN (150 aa). A compositionally biased stretch (basic and acidic residues) spans 681 to 690; the sequence is TGRHYNDKVP. A compositionally biased stretch (polar residues) spans 704–724; that stretch reads SQSSKDSFTSEQDSSLLQQYL.

It is found in the cytoplasm. Its subcellular location is the cytoskeleton. It localises to the microtubule organizing center. The protein resides in the centrosome. Acts as a key negative regulator of ciliogenesis in collaboration with ccp110 by capping the mother centriole thereby preventing cilia formation. Required for recruitment of ccp110 to the centrosome. The protein is Centrosomal protein of 97 kDa (cep97) of Xenopus laevis (African clawed frog).